The primary structure comprises 360 residues: MTTVLQRRESASAWERFCSFITSTNNRLYIGWFGVLMIPTLLTAVTCFVIAFIGAPPVDIDGIREPVAGSLLYGNNIITGAVVPSSNAIGLHLYPIWEAASLDEWLYNGGPYQLIIFHYMIGCICYLGRQWEYSYRLGMRPWICVAYSAPLAATYSVFLIYPLGQGSFSDGMPLGISGTFNFMFVFQAEHNILMHPFHMFGVAGVLGGSLFAAMHGSLVSSTLVRETTEGESANYGYKFGQEEETYNIVAAHGYFGRLIFQYASFSNSRSLHFFLGAWPVVCIWLTAMGISTMAFNLNGFNFNHSIVDSQGNVVNTWADVLNRANLGFEVMHERNAHNFPLDLAAGESAPVALTAPVING.

A run of 3 helical transmembrane segments spans residues 29–46 (YIGW…TAVT), 118–133 (HYMI…QWEY), and 142–156 (WICV…ATYS). Chlorophyll a is bound at residue His-118. Pheophytin a is bound at residue Tyr-126. [CaMn4O5] cluster is bound by residues Asp-170 and Glu-189. The chain crosses the membrane as a helical span at residues 197–218 (FHMFGVAGVLGGSLFAAMHGSL). His-198 provides a ligand contact to chlorophyll a. Residues His-215 and 264-265 (SF) each bind a quinone. His-215 contacts Fe cation. A Fe cation-binding site is contributed by His-272. Residues 274–288 (FLGAWPVVCIWLTAM) traverse the membrane as a helical segment. [CaMn4O5] cluster contacts are provided by His-332, Glu-333, Asp-342, and Ala-344. A propeptide spanning residues 345–360 (AGESAPVALTAPVING) is cleaved from the precursor.

Belongs to the reaction center PufL/M/PsbA/D family. As to quaternary structure, PSII is composed of 1 copy each of membrane proteins PsbA, PsbB, PsbC, PsbD, PsbE, PsbF, PsbH, PsbI, PsbJ, PsbK, PsbL, PsbM, PsbT, PsbX, PsbY, PsbZ, Psb30/Ycf12, peripheral proteins PsbO, CyanoQ (PsbQ), PsbU, PsbV and a large number of cofactors. It forms dimeric complexes. The D1/D2 heterodimer binds P680, chlorophylls that are the primary electron donor of PSII, and subsequent electron acceptors. It shares a non-heme iron and each subunit binds pheophytin, quinone, additional chlorophylls, carotenoids and lipids. D1 provides most of the ligands for the Mn4-Ca-O5 cluster of the oxygen-evolving complex (OEC). There is also a Cl(-1) ion associated with D1 and D2, which is required for oxygen evolution. The PSII complex binds additional chlorophylls, carotenoids and specific lipids. serves as cofactor. In terms of processing, tyr-161 forms a radical intermediate that is referred to as redox-active TyrZ, YZ or Y-Z. C-terminally processed by CtpA; processing is essential to allow assembly of the oxygen-evolving complex and thus photosynthetic growth.

The protein resides in the cellular thylakoid membrane. The catalysed reaction is 2 a plastoquinone + 4 hnu + 2 H2O = 2 a plastoquinol + O2. Its function is as follows. Photosystem II (PSII) is a light-driven water:plastoquinone oxidoreductase that uses light energy to abstract electrons from H(2)O, generating O(2) and a proton gradient subsequently used for ATP formation. It consists of a core antenna complex that captures photons, and an electron transfer chain that converts photonic excitation into a charge separation. The D1/D2 (PsbA/PsbD) reaction center heterodimer binds P680, the primary electron donor of PSII as well as several subsequent electron acceptors. This chain is Photosystem II protein D1 2, found in Acaryochloris marina (strain MBIC 11017).